The sequence spans 173 residues: 3-isopropylmalate dehydratase small subunit (173 aa).

This sequence belongs to the LeuD family. LeuD type 2 subfamily. In terms of assembly, heterodimer of LeuC and LeuD.

It catalyses the reaction (2R,3S)-3-isopropylmalate = (2S)-2-isopropylmalate. It participates in amino-acid biosynthesis; L-leucine biosynthesis; L-leucine from 3-methyl-2-oxobutanoate: step 2/4. In terms of biological role, catalyzes the isomerization between 2-isopropylmalate and 3-isopropylmalate, via the formation of 2-isopropylmaleate. The chain is 3-isopropylmalate dehydratase small subunit from Caldicellulosiruptor saccharolyticus (strain ATCC 43494 / DSM 8903 / Tp8T 6331).